Consider the following 350-residue polypeptide: Selenide, water dikinase (350 aa).

Selenocysteine 15 is an active-site residue. Selenocysteine 15 is a non-standard amino acid (selenocysteine). Residues lysine 18 and 47–49 each bind ATP; that span reads HNE. Aspartate 50 lines the Mg(2+) pocket. ATP-binding positions include aspartate 67, aspartate 90, and 138–140; that span reads GHS. Residue aspartate 90 participates in Mg(2+) binding. Mg(2+) is bound at residue aspartate 227.

This sequence belongs to the selenophosphate synthase 1 family. Class I subfamily. As to quaternary structure, homodimer. It depends on Mg(2+) as a cofactor.

The catalysed reaction is hydrogenselenide + ATP + H2O = selenophosphate + AMP + phosphate + 2 H(+). Its function is as follows. Synthesizes selenophosphate from selenide and ATP. The sequence is that of Selenide, water dikinase from Nitratidesulfovibrio vulgaris (strain DSM 19637 / Miyazaki F) (Desulfovibrio vulgaris).